Reading from the N-terminus, the 872-residue chain is Valine--tRNA ligase (872 aa).

The short motif at 49–59 (PNVTGILHIGH) is the 'HIGH' region element. The 'KMSKS' region motif lies at 531–535 (KMSKS). ATP is bound at residue lysine 534. Residues 810–871 (PLIARLKKQL…IQQELDLLEQ (62 aa)) are a coiled coil.

It belongs to the class-I aminoacyl-tRNA synthetase family. ValS type 1 subfamily. Monomer.

It localises to the cytoplasm. It carries out the reaction tRNA(Val) + L-valine + ATP = L-valyl-tRNA(Val) + AMP + diphosphate. Catalyzes the attachment of valine to tRNA(Val). As ValRS can inadvertently accommodate and process structurally similar amino acids such as threonine, to avoid such errors, it has a 'posttransfer' editing activity that hydrolyzes mischarged Thr-tRNA(Val) in a tRNA-dependent manner. The sequence is that of Valine--tRNA ligase from Helicobacter pylori (strain J99 / ATCC 700824) (Campylobacter pylori J99).